The following is a 296-amino-acid chain: NAD kinase (296 aa).

D72 (proton acceptor) is an active-site residue. Residues 72–73 (DG), 146–147 (ND), R157, K174, D176, 187–192 (TAYALS), and Q247 each bind NAD(+).

This sequence belongs to the NAD kinase family. Requires a divalent metal cation as cofactor.

It is found in the cytoplasm. It carries out the reaction NAD(+) + ATP = ADP + NADP(+) + H(+). In terms of biological role, involved in the regulation of the intracellular balance of NAD and NADP, and is a key enzyme in the biosynthesis of NADP. Catalyzes specifically the phosphorylation on 2'-hydroxyl of the adenosine moiety of NAD to yield NADP. The polypeptide is NAD kinase (Pseudomonas syringae pv. syringae (strain B728a)).